The primary structure comprises 181 residues: Inner membrane-spanning protein YciB (181 aa).

Transmembrane regions (helical) follow at residues 22–42 (IYTA…VTYA), 50–70 (MQLI…FLHD), 80–100 (IVYC…KPVI), 122–142 (WVLF…EMPL), and 148–168 (FKVF…GMYV).

This sequence belongs to the YciB family.

Its subcellular location is the cell inner membrane. Its function is as follows. Plays a role in cell envelope biogenesis, maintenance of cell envelope integrity and membrane homeostasis. The protein is Inner membrane-spanning protein YciB of Aliivibrio fischeri (strain MJ11) (Vibrio fischeri).